A 296-amino-acid chain; its full sequence is Protoheme IX farnesyltransferase (296 aa).

Residues 1 to 9 (MMFKQYLQV) lie on the Cytoplasmic side of the membrane. Residues 10-28 (TKPGIIFGNLISVIGGFLL) traverse the membrane as a helical segment. Over 29–37 (ASKGSIDYP) the chain is Periplasmic. The chain crosses the membrane as a helical span at residues 38–56 (LFIYTLVGVSLVVASGCVF). Residues 57–78 (NNYIDRDIDRKMERTKNRVLVK) are Cytoplasmic-facing. The helical transmembrane segment at 79-97 (GLISPAVSLVYATLLGIAG) threads the bilayer. The Periplasmic portion of the chain corresponds to 98–107 (FMLLWFGANP). The helical transmembrane segment at 108–126 (LACWLGVMGFVVYVGVYSL) threads the bilayer. At 127-197 (YMKRHSVYGT…YQAANIPVLP (71 aa)) the chain is on the cytoplasmic side. The helical transmembrane segment at 198–216 (VVKGISVAKNHITLYIIAF) threads the bilayer. Topologically, residues 217–228 (AVATLMLSLGGY) are periplasmic. The chain crosses the membrane as a helical span at residues 229 to 247 (AGYKYLVVAAAVSVWWLGM). The Cytoplasmic portion of the chain corresponds to 248-268 (ALRGYKVADDRIWARKLFGFS). A helical transmembrane segment spans residues 269–287 (IIAITALSVMMSVDFMVPD). Over 288 to 296 (SHTLLAAVW) the chain is Periplasmic.

This sequence belongs to the UbiA prenyltransferase family. Protoheme IX farnesyltransferase subfamily.

The protein localises to the cell inner membrane. The catalysed reaction is heme b + (2E,6E)-farnesyl diphosphate + H2O = Fe(II)-heme o + diphosphate. Its pathway is porphyrin-containing compound metabolism; heme O biosynthesis; heme O from protoheme: step 1/1. In terms of biological role, converts heme B (protoheme IX) to heme O by substitution of the vinyl group on carbon 2 of heme B porphyrin ring with a hydroxyethyl farnesyl side group. In Escherichia coli O139:H28 (strain E24377A / ETEC), this protein is Protoheme IX farnesyltransferase.